A 188-amino-acid chain; its full sequence is uncharacterized protein (188 aa).

This is an uncharacterized protein from Autographa californica nuclear polyhedrosis virus (AcMNPV).